The primary structure comprises 1261 residues: Myosin-1 (1261 aa).

Residues 1–39 are disordered; sequence MGHSRRPVGGEKKSRGFGRSKVADVGDGRQAGKPQVKKA. One can recognise a Myosin motor domain in the interval 49–728; sequence IGVSDLTLLS…TLFALEAMRD (680 aa). An ATP-binding site is contributed by 142 to 149; it reads GESGAGKT. Residue S370 is modified to Phosphoserine. Residues 417–499 are actin-binding; sequence SIGILDIYGF…PGVFAALNDA (83 aa). IQ domains follow at residues 732–752 and 753–778; these read HNMA…RIEC and AIRI…QGHQ. In terms of domain architecture, TH1 spans 786 to 973; the sequence is RRRMSLLGSR…KSHTIHTSPG (188 aa). 2 disordered regions span residues 956-1093 and 1139-1261; these read ASPN…KALY and YLEE…DDEW. 4 stretches are compositionally biased toward pro residues: residues 1019-1029, 1038-1052, 1072-1084, and 1147-1159; these read RPTPKPQPLPQ, IPAP…PVPQ, APPP…PPAP, and TPKP…PPAA. Positions 1084 to 1145 constitute an SH3 domain; the sequence is PKKATAKALY…PQAYLEEQVA (62 aa). Residues 1160–1181 show a composition bias toward low complexity; that stretch reads PRASPVPSANGAAATAAAAKAK. Residues 1212–1233 are compositionally biased toward polar residues; that stretch reads VSMNSQDSSGGSGRGTPNSTSN. Residues 1234–1243 show a composition bias toward low complexity; the sequence is ASLAGGLAEA.

Belongs to the TRAFAC class myosin-kinesin ATPase superfamily. Myosin family. In terms of processing, phosphorylation of the TEDS site (Ser-370) is required for the polarization of the actin cytoskeleton. Phosphorylation probably activates the myosin-I ATPase activity.

Its subcellular location is the cytoplasm. It localises to the cytoskeleton. The protein resides in the actin patch. In terms of biological role, type-I myosin implicated in the organization of the actin cytoskeleton. Required for proper actin cytoskeleton polarization. At the cell cortex, assembles in patch-like structures together with proteins from the actin-polymerizing machinery and promotes actin assembly. Functions as actin nucleation-promoting factor (NPF) for the Arp2/3 complex. Plays an important role in polarized growth, spore germination, hyphal morphogenesis, and septal wall formation. The polypeptide is Myosin-1 (myoA) (Aspergillus oryzae (strain ATCC 42149 / RIB 40) (Yellow koji mold)).